The primary structure comprises 236 residues: Small ribosomal subunit protein eS6 (236 aa).

Phosphoserine is present on residues S232 and S233.

Belongs to the eukaryotic ribosomal protein eS6 family. Phosphorylated.

The protein is Small ribosomal subunit protein eS6 (RPS6) of Kluyveromyces lactis (strain ATCC 8585 / CBS 2359 / DSM 70799 / NBRC 1267 / NRRL Y-1140 / WM37) (Yeast).